The sequence spans 252 residues: Imidazole glycerol phosphate synthase subunit HisF (252 aa).

Catalysis depends on residues aspartate 11 and aspartate 130.

The protein belongs to the HisA/HisF family. In terms of assembly, heterodimer of HisH and HisF.

Its subcellular location is the cytoplasm. It carries out the reaction 5-[(5-phospho-1-deoxy-D-ribulos-1-ylimino)methylamino]-1-(5-phospho-beta-D-ribosyl)imidazole-4-carboxamide + L-glutamine = D-erythro-1-(imidazol-4-yl)glycerol 3-phosphate + 5-amino-1-(5-phospho-beta-D-ribosyl)imidazole-4-carboxamide + L-glutamate + H(+). It participates in amino-acid biosynthesis; L-histidine biosynthesis; L-histidine from 5-phospho-alpha-D-ribose 1-diphosphate: step 5/9. Functionally, IGPS catalyzes the conversion of PRFAR and glutamine to IGP, AICAR and glutamate. The HisF subunit catalyzes the cyclization activity that produces IGP and AICAR from PRFAR using the ammonia provided by the HisH subunit. This chain is Imidazole glycerol phosphate synthase subunit HisF, found in Bacillus cereus (strain ZK / E33L).